The chain runs to 359 residues: DNA replication and repair protein RecF (359 aa).

30-37 (GQNAQGKT) contributes to the ATP binding site.

This sequence belongs to the RecF family.

It localises to the cytoplasm. In terms of biological role, the RecF protein is involved in DNA metabolism; it is required for DNA replication and normal SOS inducibility. RecF binds preferentially to single-stranded, linear DNA. It also seems to bind ATP. In Lactococcus lactis subsp. cremoris (strain SK11), this protein is DNA replication and repair protein RecF.